Reading from the N-terminus, the 122-residue chain is MANHEQIIEAIKEMSVLELNDLVKAIEEEFGVTAAAPVAVAGAAGGADAAAEKTEFDVELTSAGSSKIKVVKAVKEATGLGLKDAKELVDGAPKVIKEALPKEEAEKLKEQLEEVGATVELK.

Belongs to the bacterial ribosomal protein bL12 family. As to quaternary structure, homodimer. Part of the ribosomal stalk of the 50S ribosomal subunit. Forms a multimeric L10(L12)X complex, where L10 forms an elongated spine to which 2 to 4 L12 dimers bind in a sequential fashion. Binds GTP-bound translation factors.

In terms of biological role, forms part of the ribosomal stalk which helps the ribosome interact with GTP-bound translation factors. Is thus essential for accurate translation. The protein is Large ribosomal subunit protein bL12 of Staphylococcus aureus (strain Mu50 / ATCC 700699).